Reading from the N-terminus, the 957-residue chain is MTQTLSQLENSGAFIERHIGPDAAQQQEMLNAVGAQSLNALTGQIVPKDIQLATPPQVGAPATEYAALAELKAIASRNKRFTSYIGMGYTAVQLPPVILRNMLENPGWYTAYTPYQPEVSQGRLEALLNFQQVTLDLTGLDMASASLLDEATAAAEAMAMAKRVSKLKNANRFFVASDVHPQTLDVVRTRAETFGFEVIVDDAQKVLDHQDVFGVLLQQVGTTGEIHDYTALISELKSRKIVVSVAADIMALVLLTAPGKQGADIVFGSAQRFGVPMGYGGPHAAFFAAKDEYKRSMPGRIIGVSKDAAGNTALRMAMQTREQHIRREKANSNICTSQVLLANIASLYAVYHGPVGLKRIANRIHRLTDILAAGLQQKGLKLRHAHYFDTLCVEVADKAGVLARAEAAEINLRSDILNAVGITLDETTTRENVMQLFSVLLGDNHGLDIDTLDKDVAHDSRSIQAAMLRDDEILTHPVFNRYHSETEMMRYMHSLERKDLALNQAMIPLGSCTMKLNAAAEMIPITWPEFAELHPFCPPEQAEGYQQMIAQLADWLVKLTGYDAVCMQPNSGAQGEYAGLLAIRHYHESRNEGHRDICLIPASAHGTNPASAHMAGMQVVVVACDKNGNIDLTDLRAKAEQAGDNLSCIMVTYPSTHGVYEETIREVCEVVHQFGGQVYLDGANMNAQVGITSPGFIGADVSHLNLHKTFCIPHGGGGPGMGPIGVKAHLAPFVPGHSVVQIEGMLTRQGAVSAAPFGSASILPISWMYIRMMGAEGLKKASQVAILNANYIASRLQDAFPVLYTGRDGRVAHECILDIRPLKEETGISELDIAKRLIDYGFHAPTMSFPVAGTLMVEPTESESKVELDRFIDAMLAIRAEIDQVKAGVWPLEDNPLVNAPHIQSELVAEWAHPYSREVAVFPAGVADKYWPTVKRLDDVYGDRNLFCSCVPISEYQ.

An N6-(pyridoxal phosphate)lysine modification is found at Lys-708.

This sequence belongs to the GcvP family. The glycine cleavage system is composed of four proteins: P, T, L and H. Pyridoxal 5'-phosphate serves as cofactor.

It carries out the reaction N(6)-[(R)-lipoyl]-L-lysyl-[glycine-cleavage complex H protein] + glycine + H(+) = N(6)-[(R)-S(8)-aminomethyldihydrolipoyl]-L-lysyl-[glycine-cleavage complex H protein] + CO2. Functionally, the glycine cleavage system catalyzes the degradation of glycine. The P protein binds the alpha-amino group of glycine through its pyridoxal phosphate cofactor; CO(2) is released and the remaining methylamine moiety is then transferred to the lipoamide cofactor of the H protein. In Escherichia coli O81 (strain ED1a), this protein is Glycine dehydrogenase (decarboxylating).